A 91-amino-acid polypeptide reads, in one-letter code: Large ribosomal subunit protein uL23c (91 aa).

It belongs to the universal ribosomal protein uL23 family. Part of the 50S ribosomal subunit.

The protein resides in the plastid. It is found in the chloroplast. Binds to 23S rRNA. This is Large ribosomal subunit protein uL23c (rpl23) from Chaetosphaeridium globosum (Charophycean green alga).